We begin with the raw amino-acid sequence, 479 residues long: MEKSLLFLFAVTLLSVGCTDAGESKGSIHKEKERSKRQALKHLTVTTIMEQPFSMKSESGMEGFCIDLLSELSQSLGFNYTIKEVKDGRYGAKDQDGNWNGMVGEVLRKEVDLAVAPLTITANRERELAFTKPFMQTGISILLRKEDASENSFLFGFLTPFSKETWIGILVAYMVTSLCLFLVGRLSPCEWTELSTEQNNFTFLNSLWFGAGAFTLQGAEPHPKSVSARIIAVIWWIFSIVLVAAYIASFAAFLNSDSVQTTNIQTFEDLVNQRTLEFGTINSSSTFQFFKNSKNPTYRMIYEYMDKRKDELLVKSFAEGVRRVRESNYAFLGESVMQDIMVAKHCELARAPQIIAGRGYGIAASIDSQLIKQLSIAILEQTESGNIEYLRKKWWDNTCSMKRSAGWNPVQPHTLGGIFLILGIGLALGVIAALIELVLKARNNADQQKKSCCSAFSEEMGERLGTNKENQGAVDSVKS.

The signal sequence occupies residues 1 to 17; the sequence is MEKSLLFLFAVTLLSVG. The Extracellular segment spans residues 18–163; sequence CTDAGESKGS…LFGFLTPFSK (146 aa). Residue Asn79 is glycosylated (N-linked (GlcNAc...) asparagine). The helical transmembrane segment at 164-184 threads the bilayer; that stretch reads ETWIGILVAYMVTSLCLFLVG. Topologically, residues 185-229 are cytoplasmic; sequence RLSPCEWTELSTEQNNFTFLNSLWFGAGAFTLQGAEPHPKSVSAR. A helical membrane pass occupies residues 230–250; that stretch reads IIAVIWWIFSIVLVAAYIASF. The Extracellular portion of the chain corresponds to 251–414; it reads AAFLNSDSVQ…AGWNPVQPHT (164 aa). N-linked (GlcNAc...) asparagine glycosylation is present at Asn282. The helical transmembrane segment at 415 to 435 threads the bilayer; sequence LGGIFLILGIGLALGVIAALI. The Cytoplasmic portion of the chain corresponds to 436-479; sequence ELVLKARNNADQQKKSCCSAFSEEMGERLGTNKENQGAVDSVKS.

This sequence belongs to the glutamate-gated ion channel (TC 1.A.10.1) family. Homomeric.

The protein resides in the cell membrane. It is found in the postsynaptic cell membrane. In terms of biological role, receptor for glutamate. L-glutamate acts as an excitatory neurotransmitter at many synapses in the central nervous system. The postsynaptic actions of Glu are mediated by a variety of receptors that are named according to their selective agonists. This receptor binds domoate &gt; kainate &gt; AMPA &gt; NBQX &gt; glutamate. This Xenopus laevis (African clawed frog) protein is Glutamate receptor U1 (kbp).